Consider the following 63-residue polypeptide: Metallothionein-1 (63 aa).

2 consecutive repeats follow at residues 23-30 and 56-63; these read CGDKCECK.

This sequence belongs to the metallothionein superfamily. Type 9 family.

In terms of biological role, the metallothioneins are involved in the cellular sequestration of toxic metal ions. The polypeptide is Metallothionein-1 (MT-I) (Candida glabrata (strain ATCC 2001 / BCRC 20586 / JCM 3761 / NBRC 0622 / NRRL Y-65 / CBS 138) (Yeast)).